The following is a 197-amino-acid chain: Holliday junction branch migration complex subunit RuvA (197 aa).

The tract at residues 1–64 (MIARLAGKVA…QDAIELYGFA (64 aa)) is domain I. Positions 65–141 (SEDEEAVFRA…LALLARAAGP (77 aa)) are domain II. The tract at residues 141–145 (PARAK) is flexible linker. The tract at residues 146 to 197 (PGAGVVEQLRQALVNLGYKPPQADAAADALRDEAEGKKLDELLREALKRLRG) is domain III.

This sequence belongs to the RuvA family. In terms of assembly, homotetramer. Forms an RuvA(8)-RuvB(12)-Holliday junction (HJ) complex. HJ DNA is sandwiched between 2 RuvA tetramers; dsDNA enters through RuvA and exits via RuvB. An RuvB hexamer assembles on each DNA strand where it exits the tetramer. Each RuvB hexamer is contacted by two RuvA subunits (via domain III) on 2 adjacent RuvB subunits; this complex drives branch migration. In the full resolvosome a probable DNA-RuvA(4)-RuvB(12)-RuvC(2) complex forms which resolves the HJ.

The protein resides in the cytoplasm. In terms of biological role, the RuvA-RuvB-RuvC complex processes Holliday junction (HJ) DNA during genetic recombination and DNA repair, while the RuvA-RuvB complex plays an important role in the rescue of blocked DNA replication forks via replication fork reversal (RFR). RuvA specifically binds to HJ cruciform DNA, conferring on it an open structure. The RuvB hexamer acts as an ATP-dependent pump, pulling dsDNA into and through the RuvAB complex. HJ branch migration allows RuvC to scan DNA until it finds its consensus sequence, where it cleaves and resolves the cruciform DNA. This chain is Holliday junction branch migration complex subunit RuvA, found in Anaeromyxobacter sp. (strain Fw109-5).